An 842-amino-acid chain; its full sequence is Probable vinculin (842 aa).

Residues 585–679 are a coiled coil; that stretch reads KEARKRLDDV…AAEEEERKRA (95 aa).

This sequence belongs to the vinculin/alpha-catenin family. Monomer. Associates with F-actin. Interacts with aarA, ctxA, ctxB and rgaA. In terms of tissue distribution, epithelium.

It localises to the cytoplasm. The protein localises to the cell cortex. The protein resides in the cell junction. In terms of biological role, involved in cell adhesion. Thought to play an important role in cytokinesis B, probably by providing substrate adhesion and traction forces. Required to organize and polarize the tip epithelium during cytokinesis. Required for the normal distribution of myosin in the tip epithelium. Involved in the localization of ctxA, ctxB, dcsA, exoc6 and rgaA. Thought to form a complex with ctxA, ctxB, and rgaA which regulates myosin accumulation to the apical plasma membrane. The polypeptide is Probable vinculin (ctnnA) (Dictyostelium discoideum (Social amoeba)).